We begin with the raw amino-acid sequence, 396 residues long: Elongation factor Tu (396 aa).

The 198-residue stretch at 10–207 (KPHCNIGTIG…VDAYIPQPPR (198 aa)) folds into the tr-type G domain. Residues 19 to 26 (GHVDHGKT) are G1. 19–26 (GHVDHGKT) contacts GTP. Thr26 provides a ligand contact to Mg(2+). The segment at 60-64 (GITIS) is G2. The interval 81–84 (DCPG) is G3. GTP-binding positions include 81 to 85 (DCPGH) and 136 to 139 (NKVD). Residues 136–139 (NKVD) form a G4 region. The interval 174–176 (SAL) is G5.

This sequence belongs to the TRAFAC class translation factor GTPase superfamily. Classic translation factor GTPase family. EF-Tu/EF-1A subfamily. As to quaternary structure, monomer.

It is found in the cytoplasm. The catalysed reaction is GTP + H2O = GDP + phosphate + H(+). GTP hydrolase that promotes the GTP-dependent binding of aminoacyl-tRNA to the A-site of ribosomes during protein biosynthesis. This chain is Elongation factor Tu, found in Novosphingobium aromaticivorans (strain ATCC 700278 / DSM 12444 / CCUG 56034 / CIP 105152 / NBRC 16084 / F199).